Consider the following 468-residue polypeptide: 6-phospho-beta-galactosidase (468 aa).

Positions 19, 116, 159, 160, and 297 each coordinate D-galactose 6-phosphate. Glu160 functions as the Proton donor in the catalytic mechanism. Catalysis depends on Glu375, which acts as the Nucleophile. The D-galactose 6-phosphate site is built by Ser428, Trp429, Lys435, and Tyr437.

It belongs to the glycosyl hydrolase 1 family.

It carries out the reaction a 6-phospho-beta-D-galactoside + H2O = D-galactose 6-phosphate + an alcohol. It participates in carbohydrate metabolism; lactose degradation; D-galactose 6-phosphate and beta-D-glucose from lactose 6-phosphate: step 1/1. In Streptococcus pneumoniae (strain JJA), this protein is 6-phospho-beta-galactosidase.